The chain runs to 311 residues: Coproporphyrin III ferrochelatase 1 (311 aa).

Fe-coproporphyrin III contacts are provided by residues Tyr-12, Arg-29, 45 to 46, Ser-53, and Tyr-124; that span reads RY. The Fe(2+) site is built by His-182 and Glu-263.

Belongs to the ferrochelatase family.

It localises to the cytoplasm. The catalysed reaction is Fe-coproporphyrin III + 2 H(+) = coproporphyrin III + Fe(2+). It participates in porphyrin-containing compound metabolism; protoheme biosynthesis. Its function is as follows. Involved in coproporphyrin-dependent heme b biosynthesis. Catalyzes the insertion of ferrous iron into coproporphyrin III to form Fe-coproporphyrin III. The chain is Coproporphyrin III ferrochelatase 1 from Bacillus cereus (strain ZK / E33L).